The sequence spans 158 residues: Protein GLUTAMINE DUMPER 1 (158 aa).

Over 1–36 (MRPLSVQSKFEDVATSTSVNHHGVTPQSPWHSPVPY) the chain is Extracellular. The chain crosses the membrane as a helical span at residues 37-57 (LFGGLAAMLGLIAFALLILAC). Topologically, residues 58–158 (SYWRLSSSGE…DTGETTTTSH (101 aa)) are cytoplasmic. The segment at 65–85 (SGEEDGQNVDEEKESRSGDKA) is disordered. A compositionally biased stretch (acidic residues) spans 66 to 76 (GEEDGQNVDEE). Positions 96 to 100 (VIMAG) match the VIMAG motif. The segment at 126-158 (ISQEESVAKEEEKMREGEEEKVKDTGETTTTSH) is disordered. Residues 131-151 (SVAKEEEKMREGEEEKVKDTG) show a composition bias toward basic and acidic residues.

This sequence belongs to the GLUTAMINE DUMPER 1 (TC 9.B.60) family. In terms of assembly, interacts with LOG2. In terms of processing, ubiquitinated by LOG2 (in vitro). Expressed in the vascular tissues and in hydathodes. Expressed in the phloem and xylem (at the protein level).

Its subcellular location is the cell membrane. In terms of biological role, probable subunit of an amino acid transporter involved in the regulation of the amino acid metabolism. Stimulates amino acid export by activating nonselective amino acid facilitators. Required the interaction with the RING-type E3 ubiquitin-protein ligase LOG2 to fulfill its function. Plays a role in the Gln export at hydathodes, at xylem parenchyma into xylem sap and from mesophyll into leaf apoplasm. Acts upstream genes involved in the salicylic acid (SA) pathway and in the geminivirus-host interaction. The chain is Protein GLUTAMINE DUMPER 1 (GDU1) from Arabidopsis thaliana (Mouse-ear cress).